We begin with the raw amino-acid sequence, 388 residues long: Succinate--CoA ligase [ADP-forming] subunit beta (388 aa).

Residues 9-244 (KQLFARYGMP…KSQEDEREAQ (236 aa)) enclose the ATP-grasp domain. ATP-binding positions include Lys-46, 53–55 (GRG), Glu-99, Thr-102, and Glu-107. The Mg(2+) site is built by Asn-199 and Asp-213. Residues Asn-264 and 321 to 323 (GIV) contribute to the substrate site.

It belongs to the succinate/malate CoA ligase beta subunit family. Heterotetramer of two alpha and two beta subunits. Mg(2+) is required as a cofactor.

It carries out the reaction succinate + ATP + CoA = succinyl-CoA + ADP + phosphate. It catalyses the reaction GTP + succinate + CoA = succinyl-CoA + GDP + phosphate. It participates in carbohydrate metabolism; tricarboxylic acid cycle; succinate from succinyl-CoA (ligase route): step 1/1. In terms of biological role, succinyl-CoA synthetase functions in the citric acid cycle (TCA), coupling the hydrolysis of succinyl-CoA to the synthesis of either ATP or GTP and thus represents the only step of substrate-level phosphorylation in the TCA. The beta subunit provides nucleotide specificity of the enzyme and binds the substrate succinate, while the binding sites for coenzyme A and phosphate are found in the alpha subunit. In Yersinia enterocolitica serotype O:8 / biotype 1B (strain NCTC 13174 / 8081), this protein is Succinate--CoA ligase [ADP-forming] subunit beta.